We begin with the raw amino-acid sequence, 104 residues long: MFAVVKASGFQRLVEVGSVISIDPTNVDSGGFVHFPVLLLVDGAEVVSDPDKLRLARVSAKFLRKLRGPKVRIHKFKNKTGYHKRQGHRQGVYVFSVTSIERGD.

This sequence belongs to the bacterial ribosomal protein bL21 family. As to quaternary structure, part of the 50S ribosomal subunit. Contacts protein L20.

Its function is as follows. This protein binds to 23S rRNA in the presence of protein L20. This chain is Large ribosomal subunit protein bL21, found in Tropheryma whipplei (strain Twist) (Whipple's bacillus).